A 1384-amino-acid chain; its full sequence is Hepatocyte growth factor receptor (1384 aa).

The first 24 residues, 1-24, serve as a signal peptide directing secretion; that stretch reads MKAPAVLAPGILVLLFTFVQKSNG. The Extracellular segment spans residues 25–933; the sequence is ECKEALVKSR…VIVQPDQNFT (909 aa). Positions 27–516 constitute a Sema domain; it reads KEALVKSRMN…TGKKITKIPL (490 aa). Asparagine 45 carries an N-linked (GlcNAc...) asparagine glycan. Disulfide bonds link cysteine 95–cysteine 101, cysteine 98–cysteine 160, cysteine 133–cysteine 141, and cysteine 173–cysteine 176. N-linked (GlcNAc...) asparagine glycosylation is present at asparagine 106. Asparagine 149 is a glycosylation site (N-linked (GlcNAc...) asparagine). 2 N-linked (GlcNAc...) asparagine glycosylation sites follow: asparagine 203 and asparagine 359. 2 disulfide bridges follow: cysteine 299/cysteine 364 and cysteine 386/cysteine 398. N-linked (GlcNAc...) asparagine glycans are attached at residues asparagine 400 and asparagine 406. 4 disulfide bridges follow: cysteine 521–cysteine 539, cysteine 527–cysteine 562, cysteine 530–cysteine 546, and cysteine 542–cysteine 552. IPT/TIG domains lie at 564–656, 658–740, and 743–837; these read PTIY…FSYV, PIIT…FIYR, and PIVY…LIYV. O-linked (Man) threonine glycosylation is present at threonine 583. N-linked (GlcNAc...) asparagine glycans are attached at residues asparagine 608 and asparagine 636. 2 O-linked (Man) threonine glycosylation sites follow: threonine 677 and threonine 762. N-linked (GlcNAc...) asparagine glycosylation is found at asparagine 786, asparagine 880, and asparagine 931. A helical membrane pass occupies residues 934–956; that stretch reads GLIVGVVSVSIILLLLLGLFLWL. Topologically, residues 957-1384 are cytoplasmic; sequence KKRKQIKDLG…NVSGEDDDDT (428 aa). Serine 967 is subject to Phosphoserine. At threonine 978 the chain carries Phosphothreonine. Phosphoserine occurs at positions 991, 998, and 1001. Tyrosine 1004 carries the phosphotyrosine modification. The Protein kinase domain occupies 1079–1346; sequence VHFNEVIGRG…RIAAIFSAFI (268 aa). ATP is bound by residues 1085-1093 and lysine 1111; that span reads IGRGHFGCV. Aspartate 1205 serves as the catalytic Proton acceptor. Positions 1213 to 1382 are interaction with RANBP9; it reads LDEKFTVKVA…QENVSGEDDD (170 aa). Tyrosine 1231 is subject to Phosphotyrosine. 2 positions are modified to phosphotyrosine; by autocatalysis: tyrosine 1235 and tyrosine 1236. Position 1290 is a phosphothreonine (threonine 1290). The tract at residues 1321–1360 is interaction with MUC20; that stretch reads WHPKAELRPSFSELVSRIAAIFSAFIGEHYVHVNATYVNV. Phosphotyrosine; by autocatalysis is present on residues tyrosine 1350 and tyrosine 1357. Tyrosine 1366 carries the phosphotyrosine modification.

It belongs to the protein kinase superfamily. Tyr protein kinase family. Heterodimer made of an alpha chain (50 kDa) and a beta chain (145 kDa) which are disulfide linked. Binds PLXNB1. Interacts when phosphorylated with downstream effectors including STAT3, PIK3R1, SRC, PCLG1, GRB2 and GAB1. Interacts with SPSB1, SPSB2 and SPSB4. Interacts with INPP5D/SHIP1. When phosphorylated at Tyr-1357, interacts with INPPL1/SHIP2. Interacts with RANBP9 and RANBP10, as well as SPSB1, SPSB2, SPSB3 and SPSB4. SPSB1 binding occurs in the presence and in the absence of HGF, however HGF treatment has a positive effect on this interaction. Interacts with MUC20; prevents interaction with GRB2 and suppresses hepatocyte growth factor-induced cell proliferation. Interacts with GRB10. Interacts with PTPN1 and PTPN2. Interacts with HSP90AA1 and HSP90AB1; the interaction suppresses MET kinase activity. Interacts with tensin TNS3. Interacts (when phosphorylated) with tensin TNS4 (via SH2 domain); the interaction increases MET protein stability by inhibiting MET endocytosis and subsequent lysosomal degradation. Autophosphorylated in response to ligand binding on Tyr-1235 and Tyr-1236 in the kinase domain leading to further phosphorylation of Tyr-1350 and Tyr-1357 in the C-terminal multifunctional docking site. Dephosphorylated by PTPRJ at Tyr-1350 and Tyr-1366. Dephosphorylated by PTPN1 and PTPN2. Post-translationally, ubiquitinated. Ubiquitination by CBL regulates the receptor stability and activity through proteasomal degradation. In terms of processing, O-mannosylation of IPT/TIG domains by TMEM260 is required for protein maturation. O-mannosylated residues are composed of single mannose glycans that are not elongated or modified.

It localises to the membrane. It catalyses the reaction L-tyrosyl-[protein] + ATP = O-phospho-L-tyrosyl-[protein] + ADP + H(+). Its activity is regulated as follows. In its inactive state, the C-terminal tail interacts with the catalytic domain and inhibits the kinase activity. Upon ligand binding, the C-terminal tail is displaced and becomes phosphorylated, thus increasing the kinase activity. Receptor tyrosine kinase that transduces signals from the extracellular matrix into the cytoplasm by binding to hepatocyte growth factor/HGF ligand. Regulates many physiological processes including proliferation, scattering, morphogenesis and survival. Ligand binding at the cell surface induces autophosphorylation of MET on its intracellular domain that provides docking sites for downstream signaling molecules. Following activation by ligand, interacts with the PI3-kinase subunit PIK3R1, PLCG1, SRC, GRB2, STAT3 or the adapter GAB1. Recruitment of these downstream effectors by MET leads to the activation of several signaling cascades including the RAS-ERK, PI3 kinase-AKT, or PLCgamma-PKC. The RAS-ERK activation is associated with the morphogenetic effects while PI3K/AKT coordinates prosurvival effects. During embryonic development, MET signaling plays a role in gastrulation, development and migration of muscles and neuronal precursors, angiogenesis and kidney formation. In adults, participates in wound healing as well as organ regeneration and tissue remodeling. Also promotes differentiation and proliferation of hematopoietic cells. The protein is Hepatocyte growth factor receptor (MET) of Ovis aries (Sheep).